The chain runs to 508 residues: Photosystem II CP47 reaction center protein (508 aa).

A run of 6 helical transmembrane segments spans residues 21–36 (AVHI…WAGS), 101–115 (IVFS…IWHW), 140–156 (GIHL…FGAF), 203–218 (IAAG…FHLS), 237–252 (VLSS…AFIV), and 457–472 (TFAL…HGAR).

The protein belongs to the PsbB/PsbC family. PsbB subfamily. In terms of assembly, PSII is composed of 1 copy each of membrane proteins PsbA, PsbB, PsbC, PsbD, PsbE, PsbF, PsbH, PsbI, PsbJ, PsbK, PsbL, PsbM, PsbT, PsbX, PsbY, PsbZ, Psb30/Ycf12, at least 3 peripheral proteins of the oxygen-evolving complex and a large number of cofactors. It forms dimeric complexes. The cofactor is Binds multiple chlorophylls. PSII binds additional chlorophylls, carotenoids and specific lipids..

The protein resides in the plastid. Its subcellular location is the chloroplast thylakoid membrane. One of the components of the core complex of photosystem II (PSII). It binds chlorophyll and helps catalyze the primary light-induced photochemical processes of PSII. PSII is a light-driven water:plastoquinone oxidoreductase, using light energy to abstract electrons from H(2)O, generating O(2) and a proton gradient subsequently used for ATP formation. The chain is Photosystem II CP47 reaction center protein from Cryptomeria japonica (Japanese cedar).